We begin with the raw amino-acid sequence, 269 residues long: Surfeit locus protein 4 (269 aa).

The next 5 membrane-spanning stretches (helical) occupy residues 64-84 (FLAT…CVLV), 92-112 (YACF…SILW), 179-199 (FFSI…AVGF), 203-223 (LAAL…NAFW), and 242-262 (TTSV…GVSM). Residues 266–269 (KKEW) carry the Di-lysine motif motif.

The protein belongs to the SURF4 family.

It localises to the endoplasmic reticulum membrane. The protein resides in the endoplasmic reticulum-Golgi intermediate compartment membrane. It is found in the golgi apparatus membrane. Endoplasmic reticulum cargo receptor that mediates the export of lipoproteins by recruiting cargos into COPII vesicles to facilitate their secretion. In Danio rerio (Zebrafish), this protein is Surfeit locus protein 4.